The chain runs to 341 residues: MSQTTTETIIPLDSSVKDKLDPEYVNFYNKYVCSNLPIVKTHTYPVDFLRNNGNVMPGQSELLPVESTEDITIPRKHTKAPSGVPSRIFRPHGTAPEGGWPCFLWFHGGGWVLGNINTENSFATHMCEQAKCVVVNVDYRLAPEDPFPACIDDGWEALLYCYENADTLGINPNKIAVGGSSAGGNIAAVLSHKVAASPANFPPLVLQLLVVPVCDNTANAKTHKSWELFENTPQLPAAKMMWYRRHYLPNEKDWSNPEASPFFYPDSSFKNVCPALICAAGCDVLSSEAIAYNEKLTKAGVESTIKIYEGCPHPVMAMDAVLEKGRILNKDATNALLAAFA.

Belongs to the AB hydrolase superfamily.

The protein localises to the cytoplasm. It localises to the nucleus. The protein is AB hydrolase superfamily protein C1039.03 of Schizosaccharomyces pombe (strain 972 / ATCC 24843) (Fission yeast).